Here is a 347-residue protein sequence, read N- to C-terminus: UDP-rhamnose/UDP-galactose transporter 1 (347 aa).

The next 10 membrane-spanning stretches (helical) occupy residues 11-31 (AVSD…IIMA), 43-63 (FGFA…VGMV), 80-100 (LLWF…SLML), 103-123 (VGFY…LEWI), 132-152 (EVKA…VTDV), 159-179 (FICA…IGSL), 195-215 (APIQ…LLSG), 223-243 (MTYG…FCNI), 256-276 (SFQV…WLLF), and 285-305 (IAGM…VDIE).

It belongs to the TPT transporter family. TPT (TC 2.A.7.9) subfamily. Widely expressed in the whole plant.

Its subcellular location is the golgi apparatus membrane. Its function is as follows. Nucleotide-sugar transporter that transports UDP-rhamnose or UDP-galactose and UMP in a strict counter-exchange mode. In Arabidopsis thaliana (Mouse-ear cress), this protein is UDP-rhamnose/UDP-galactose transporter 1.